The chain runs to 382 residues: Galactokinase (382 aa).

Residue 34-37 (EHTD) participates in substrate binding. Residue 124 to 130 (GAGLSSS) coordinates ATP. Mg(2+) is bound by residues S130 and E162. Catalysis depends on D174, which acts as the Proton acceptor. Residue Y223 coordinates substrate.

Belongs to the GHMP kinase family. GalK subfamily.

It localises to the cytoplasm. The enzyme catalyses alpha-D-galactose + ATP = alpha-D-galactose 1-phosphate + ADP + H(+). The protein operates within carbohydrate metabolism; galactose metabolism. Catalyzes the transfer of the gamma-phosphate of ATP to D-galactose to form alpha-D-galactose-1-phosphate (Gal-1-P). The chain is Galactokinase from Salmonella paratyphi A (strain ATCC 9150 / SARB42).